The following is a 95-amino-acid chain: UPF0358 protein BCE_3996 (95 aa).

It belongs to the UPF0358 family.

The sequence is that of UPF0358 protein BCE_3996 from Bacillus cereus (strain ATCC 10987 / NRS 248).